A 637-amino-acid polypeptide reads, in one-letter code: Coiled-coil domain-containing protein 22 homolog (637 aa).

Coiled coils occupy residues E322 to A489 and S608 to N637.

The protein belongs to the CCDC22 family.

The sequence is that of Coiled-coil domain-containing protein 22 homolog from Dictyostelium discoideum (Social amoeba).